A 194-amino-acid chain; its full sequence is Putative manganese efflux pump MntP (194 aa).

6 helical membrane-spanning segments follow: residues 3–23, 37–57, 69–89, 110–132, 147–167, and 172–192; these read PFSIVLIGFAMSTDAFAAAIG, LRAGLIFGCIEAITPVIGWLL, DHWIAFVLLGALGTHMIVAGL, LGLATTGFATSIDAMAVGVSLAF, CTFSMVTAGVMLGRALGNLIG, and MLGGLILVIVGSVILYEHLSG.

Belongs to the MntP (TC 9.B.29) family.

It is found in the cell inner membrane. Functionally, probably functions as a manganese efflux pump. The chain is Putative manganese efflux pump MntP from Xanthomonas axonopodis pv. citri (strain 306).